The primary structure comprises 231 residues: Nitrate reductase [NAD(P)H] (231 aa).

One can recognise an FAD-binding FR-type domain in the interval 1–85 (PQKLGLPVGR…KGPHRHIEYT (85 aa)). Residues 25-28 (RAYT), 42-46 (LIKIY), phenylalanine 47, 59-61 (LMS), and threonine 112 each bind FAD.

The protein belongs to the nitrate reductase family. In terms of assembly, homodimer. Requires FAD as cofactor. It depends on heme as a cofactor. Mo-molybdopterin serves as cofactor.

The enzyme catalyses nitrite + NAD(+) + H2O = nitrate + NADH + H(+). It carries out the reaction nitrite + NADP(+) + H2O = nitrate + NADPH + H(+). Functionally, nitrate reductase is a key enzyme involved in the first step of nitrate assimilation in plants, fungi and bacteria. The sequence is that of Nitrate reductase [NAD(P)H] (NAR) from Zea mays (Maize).